A 148-amino-acid chain; its full sequence is MTPELNLKSLGAKTPYIFEYNSQLLEAFPNPNPNLDPLITLECKEFTSLCPITSQPDFGVIFIRYIPKDKMVESKSLKLYLFSYRNHGSFHESCINTILLDLVRLLEPKYLEVYGDFASRGGIAIKPFVNYAIKEYQDFKEKRLLNAK.

C50 acts as the Thioimide intermediate in catalysis. The Proton donor role is filled by D57. Residues 72-74 (VES) and 91-92 (HE) each bind substrate.

Belongs to the GTP cyclohydrolase I family. QueF type 1 subfamily.

It localises to the cytoplasm. The catalysed reaction is 7-aminomethyl-7-carbaguanine + 2 NADP(+) = 7-cyano-7-deazaguanine + 2 NADPH + 3 H(+). The protein operates within tRNA modification; tRNA-queuosine biosynthesis. Catalyzes the NADPH-dependent reduction of 7-cyano-7-deazaguanine (preQ0) to 7-aminomethyl-7-deazaguanine (preQ1). The polypeptide is NADPH-dependent 7-cyano-7-deazaguanine reductase (Helicobacter pylori (strain ATCC 700392 / 26695) (Campylobacter pylori)).